The sequence spans 523 residues: Beta-glucosidase 31 (523 aa).

The N-terminal stretch at 1–22 (MTPARVVFICCVVLLAAAAAAA) is a signal peptide. A beta-D-glucoside is bound by residues Q49, H149, and 194–195 (NE). The active-site Proton donor is E195. Residues C214 and C223 are joined by a disulfide bond. A glycan (N-linked (GlcNAc...) asparagine) is linked at N227. A beta-D-glucoside contacts are provided by Y339 and E413. The active-site Nucleophile is E413. N450 carries an N-linked (GlcNAc...) asparagine glycan. A beta-D-glucoside contacts are provided by residues W460, 467–468 (EY), and F476.

This sequence belongs to the glycosyl hydrolase 1 family.

The catalysed reaction is Hydrolysis of terminal, non-reducing beta-D-glucosyl residues with release of beta-D-glucose.. The polypeptide is Beta-glucosidase 31 (BGLU31) (Oryza sativa subsp. japonica (Rice)).